The chain runs to 508 residues: Histidine--tRNA ligase, cytoplasmic (508 aa).

Residues 3 to 59 (SPALEELVLNSRHRLVRGLKQQKASADQIEEEVAKLLKLKAQLGHDESKQKFVLKTP) form the WHEP-TRS domain. A Phosphoserine modification is found at serine 66. Residues 130–132 (DLT), arginine 157, aspartate 177, arginine 326, and 330–331 (YY) each bind L-histidine.

It belongs to the class-II aminoacyl-tRNA synthetase family. Homodimer.

The protein localises to the cytoplasm. The enzyme catalyses tRNA(His) + L-histidine + ATP = L-histidyl-tRNA(His) + AMP + diphosphate + H(+). Catalyzes the ATP-dependent ligation of histidine to the 3'-end of its cognate tRNA, via the formation of an aminoacyl-adenylate intermediate (His-AMP). Plays a role in axon guidance. In Mesocricetus auratus (Golden hamster), this protein is Histidine--tRNA ligase, cytoplasmic (HARS1).